A 117-amino-acid chain; its full sequence is Large ribosomal subunit protein eL8 (117 aa).

The protein belongs to the eukaryotic ribosomal protein eL8 family. In terms of assembly, part of the 50S ribosomal subunit. Part of the RNase P complex.

The protein localises to the cytoplasm. The catalysed reaction is Endonucleolytic cleavage of RNA, removing 5'-extranucleotides from tRNA precursor.. In terms of biological role, multifunctional RNA-binding protein that recognizes the K-turn motif in ribosomal RNA, the RNA component of RNase P, box H/ACA, box C/D and box C'/D' sRNAs. Part of ribonuclease P, a protein complex that generates mature tRNA molecules by cleaving their 5'-ends, this subunit dramatically stimulates RNase P activity. This Methanococcus maripaludis (strain DSM 14266 / JCM 13030 / NBRC 101832 / S2 / LL) protein is Large ribosomal subunit protein eL8.